Consider the following 54-residue polypeptide: Large ribosomal subunit protein bL33B (54 aa).

The protein belongs to the bacterial ribosomal protein bL33 family.

The polypeptide is Large ribosomal subunit protein bL33B (Saccharopolyspora erythraea (strain ATCC 11635 / DSM 40517 / JCM 4748 / NBRC 13426 / NCIMB 8594 / NRRL 2338)).